The following is a 249-amino-acid chain: Probable transcriptional regulatory protein Tgr7_2237 (249 aa).

Belongs to the TACO1 family.

It is found in the cytoplasm. This Thioalkalivibrio sulfidiphilus (strain HL-EbGR7) protein is Probable transcriptional regulatory protein Tgr7_2237.